Here is a 377-residue protein sequence, read N- to C-terminus: MESAIAKTGPITALGAMSGTSLDGVDAAIVVTDGVAIDGFGASAYEPYSDAQRAVLAKALGQWQGADVEAATGVIEQVHRTVLARFQQARLIGFHGQTLAHAPHTQGTLQVGDGAWLATALDRPVIWDFRTRDVEMGGEGAPLAPFFHFACAKYIGATQPLAFLNLGGVGNLTYVDPSFARPEEVGALLAFDTGPANAPVNDLVQARLGLAYDRDGQVAREGTVCQRVLERALTAPYFARIPPKSLDRNDFSQIVDLVDTLPDADAVATLTALSAAAVSQGVRHCPQVPQQVLVTGGGRKNPVLMEMLQSMLACPVKPVEDVGLDGDMLEAQAFAYLGVRVARGLPTSCPGTTGVRAPVGGGRISYPGTAAMAAQTG.

19–26 is an ATP binding site; the sequence is GTSLDGVD.

Belongs to the anhydro-N-acetylmuramic acid kinase family.

It carries out the reaction 1,6-anhydro-N-acetyl-beta-muramate + ATP + H2O = N-acetyl-D-muramate 6-phosphate + ADP + H(+). It participates in amino-sugar metabolism; 1,6-anhydro-N-acetylmuramate degradation. The protein operates within cell wall biogenesis; peptidoglycan recycling. In terms of biological role, catalyzes the specific phosphorylation of 1,6-anhydro-N-acetylmuramic acid (anhMurNAc) with the simultaneous cleavage of the 1,6-anhydro ring, generating MurNAc-6-P. Is required for the utilization of anhMurNAc either imported from the medium or derived from its own cell wall murein, and thus plays a role in cell wall recycling. In Roseobacter denitrificans (strain ATCC 33942 / OCh 114) (Erythrobacter sp. (strain OCh 114)), this protein is Anhydro-N-acetylmuramic acid kinase.